Here is an 869-residue protein sequence, read N- to C-terminus: Histone deacetylase 4 (869 aa).

3 disordered regions span residues 1–25, 128–167, and 180–218; these read MEEA…PSTS, SSSN…TISQ, and RSKG…QVNV. The span at 184-202 shows a compositional bias: polar residues; sequence ESNSQSNLMSNSVTANGNG. Ser251 is modified (phosphoserine). Positions 460-802 are histone deacetylase; the sequence is CTTGLGYDQA…VQALIGESDD (343 aa). His608 is an active-site residue.

Belongs to the histone deacetylase family. HD type 2 subfamily. In terms of assembly, interacts with mef-2. In terms of processing, phosphorylated by serine/threonine-protein kinase kin-29 at Ser-251; the phosphorylation inhibits repression of transcription by mef-2. May be phosphorylated by either cyclic-AMP dependent or cyclic-GMP dependent protein kinases. Expressed in body-wall muscle cells, hypodermal seam cells and neuronal cells including sensory amphid neuronal processes, the nerve ring, ventral nerve cords and motor neuronal commissures.

The protein resides in the nucleus. The catalysed reaction is N(6)-acetyl-L-lysyl-[histone] + H2O = L-lysyl-[histone] + acetate. Its function is as follows. Responsible for the deacetylation of lysine residues on the N-terminal part of the core histones (H2A, H2B, H3 and H4). Histone deacetylation gives a tag for epigenetic repression and plays an important role in transcriptional regulation, cell cycle progression and developmental events. Histone deacetylases act via the formation of large multiprotein complexes. Involved in transduction of sensory signals, together with egl-4, kin-29 and mef-2; binding to transcription factor mef-2 enables negative modulation of chemoreceptor gene expression in chemosensory neurons. May be involved in muscle development. In Caenorhabditis elegans, this protein is Histone deacetylase 4 (hda-4).